Here is a 130-residue protein sequence, read N- to C-terminus: Mediator of RNA polymerase II transcription subunit 10 (130 aa).

This sequence belongs to the Mediator complex subunit 10 family. As to quaternary structure, component of the Mediator complex.

The protein localises to the nucleus. Component of the Mediator complex, a coactivator involved in the regulated transcription of nearly all RNA polymerase II-dependent genes. Mediator functions as a bridge to convey information from gene-specific regulatory proteins to the basal RNA polymerase II transcription machinery. Mediator is recruited to promoters by direct interactions with regulatory proteins and serves as a scaffold for the assembly of a functional preinitiation complex with RNA polymerase II and the general transcription factors. This is Mediator of RNA polymerase II transcription subunit 10 (MED10) from Anopheles gambiae (African malaria mosquito).